Here is a 434-residue protein sequence, read N- to C-terminus: MMKAEGIPGIEQFASPGKGRGLRVSRAYGVGELLFSCPAYSYVLSVGERGLICEQCFTRKKGLAKCGKCKKAFYCNANCQKKNWPMHKLECQAMCAFGENWRPSETVRLVARIIARLKAQKERSPSEILLLLGEMEAHLEDMDNEKREMTEAHIAGLHQFYSKHLDFPDHQALLTLFSQVHCNGFTVEDEELSNLGLAIFPDIALLNHSCSPNVIVTYRGINAEVRAVKDISPGQEIYTSYIDLLYPTADRLERLRDMYYFSCDCKECTTKSMDVVKMSVRKRSDEIGEKEIKDMVRYARNSMENFRRAKQDKSPTELLEMCELSIDKMSTVFDDSNVYILHMMYQAMGICLFTEDYEGAVRYGEKVIKPFTVLYPAYSMNVASMFLKLGRLYIALDRKLAGIDAFQKALTIMEVVHGKDHTYVTELKQEMRDF.

Positions 8–242 (PGIEQFASPG…PGQEIYTSYI (235 aa)) constitute an SET domain. 18 to 20 (KGR) is a binding site for S-adenosyl-L-methionine. Positions 53, 56, 66, 69, 75, 79, 87, and 91 each coordinate Zn(2+). An MYND-type zinc finger spans residues 53-91 (CEQCFTRKKGLAKCGKCKKAFYCNANCQKKNWPMHKLEC). Residues His138, 207 to 208 (NH), and 259 to 261 (YYF) contribute to the S-adenosyl-L-methionine site.

This sequence belongs to the class V-like SAM-binding methyltransferase superfamily.

It localises to the cytoplasm. The protein resides in the cytosol. It is found in the nucleus. The catalysed reaction is L-lysyl(4)-[histone H3] + 3 S-adenosyl-L-methionine = N(6),N(6),N(6)-trimethyl-L-lysyl(4)-[histone H3] + 3 S-adenosyl-L-homocysteine + 3 H(+). It catalyses the reaction L-lysyl-[protein] + S-adenosyl-L-methionine = N(6)-methyl-L-lysyl-[protein] + S-adenosyl-L-homocysteine + H(+). Functionally, protein-lysine N-methyltransferase that methylates both histones and non-histone proteins, including p53/TP53 and RB1. Specifically trimethylates histone H3 'Lys-4' (H3K4me3) in vivo. The activity requires interaction with HSP90alpha. Shows even higher methyltransferase activity on p53/TP53. Monomethylates 'Lys-370' of p53/TP53, leading to decreased DNA-binding activity and subsequent transcriptional regulation activity of p53/TP53. Monomethylates RB1 at 'Lys-860'. This Danio rerio (Zebrafish) protein is N-lysine methyltransferase SMYD2-B (smyd2b).